The sequence spans 173 residues: Inorganic pyrophosphatase (173 aa).

Residues lysine 29, arginine 43, and tyrosine 55 each coordinate substrate. 3 residues coordinate Mg(2+): aspartate 65, aspartate 70, and aspartate 102. Tyrosine 141 is a binding site for substrate.

It belongs to the PPase family. As to quaternary structure, homohexamer. Mg(2+) serves as cofactor.

Its subcellular location is the cytoplasm. The catalysed reaction is diphosphate + H2O = 2 phosphate + H(+). In terms of biological role, catalyzes the hydrolysis of inorganic pyrophosphate (PPi) forming two phosphate ions. The protein is Inorganic pyrophosphatase of Rickettsia conorii (strain ATCC VR-613 / Malish 7).